We begin with the raw amino-acid sequence, 150 residues long: Auxin-binding protein 5 (150 aa).

An N-terminal signal peptide occupies residues 1 to 41 (MVRRRPATGAAQRPQLAAVGRGLLLASVLAAAASSLPVAES). The Zn(2+) site is built by H98, H100, and E104. A glycan (N-linked (GlcNAc...) asparagine) is linked at N136. H147 contributes to the Zn(2+) binding site.

As to quaternary structure, homodimer.

Its subcellular location is the endoplasmic reticulum lumen. This is probably a receptor for the plant hormone auxin. The sequence is that of Auxin-binding protein 5 (ABP5) from Zea mays (Maize).